Here is a 1481-residue protein sequence, read N- to C-terminus: DNA-directed RNA polymerase subunit beta'' (1481 aa).

Zn(2+)-binding residues include C217, C291, C298, and C301.

This sequence belongs to the RNA polymerase beta' chain family. RpoC2 subfamily. As to quaternary structure, in plastids the minimal PEP RNA polymerase catalytic core is composed of four subunits: alpha, beta, beta', and beta''. When a (nuclear-encoded) sigma factor is associated with the core the holoenzyme is formed, which can initiate transcription. Zn(2+) is required as a cofactor.

The protein resides in the plastid. Its subcellular location is the chloroplast. The enzyme catalyses RNA(n) + a ribonucleoside 5'-triphosphate = RNA(n+1) + diphosphate. In terms of biological role, DNA-dependent RNA polymerase catalyzes the transcription of DNA into RNA using the four ribonucleoside triphosphates as substrates. The sequence is that of DNA-directed RNA polymerase subunit beta'' from Trieres chinensis (Marine centric diatom).